A 104-amino-acid chain; its full sequence is Large ribosomal subunit protein uL24 (104 aa).

This sequence belongs to the universal ribosomal protein uL24 family. In terms of assembly, part of the 50S ribosomal subunit.

One of two assembly initiator proteins, it binds directly to the 5'-end of the 23S rRNA, where it nucleates assembly of the 50S subunit. In terms of biological role, one of the proteins that surrounds the polypeptide exit tunnel on the outside of the subunit. This chain is Large ribosomal subunit protein uL24, found in Rhodopseudomonas palustris (strain BisB18).